Here is a 689-residue protein sequence, read N- to C-terminus: Glycine--tRNA ligase beta subunit (689 aa).

This sequence belongs to the class-II aminoacyl-tRNA synthetase family. Tetramer of two alpha and two beta subunits.

The protein resides in the cytoplasm. It carries out the reaction tRNA(Gly) + glycine + ATP = glycyl-tRNA(Gly) + AMP + diphosphate. The polypeptide is Glycine--tRNA ligase beta subunit (Salmonella typhi).